The sequence spans 168 residues: 2-C-methyl-D-erythritol 2,4-cyclodiphosphate synthase (168 aa).

A divalent metal cation-binding residues include Asp-11 and His-13. 4-CDP-2-C-methyl-D-erythritol 2-phosphate is bound by residues 11-13 (DVH) and 41-42 (HS). An a divalent metal cation-binding site is contributed by His-49. 4-CDP-2-C-methyl-D-erythritol 2-phosphate-binding positions include 63–65 (DIG), 68–72 (FPDTD), 139–142 (TTTE), Phe-146, and Arg-149.

It belongs to the IspF family. In terms of assembly, homotrimer. It depends on a divalent metal cation as a cofactor.

The catalysed reaction is 4-CDP-2-C-methyl-D-erythritol 2-phosphate = 2-C-methyl-D-erythritol 2,4-cyclic diphosphate + CMP. It participates in isoprenoid biosynthesis; isopentenyl diphosphate biosynthesis via DXP pathway; isopentenyl diphosphate from 1-deoxy-D-xylulose 5-phosphate: step 4/6. Its function is as follows. Involved in the biosynthesis of isopentenyl diphosphate (IPP) and dimethylallyl diphosphate (DMAPP), two major building blocks of isoprenoid compounds. Catalyzes the conversion of 4-diphosphocytidyl-2-C-methyl-D-erythritol 2-phosphate (CDP-ME2P) to 2-C-methyl-D-erythritol 2,4-cyclodiphosphate (ME-CPP) with a corresponding release of cytidine 5-monophosphate (CMP). The chain is 2-C-methyl-D-erythritol 2,4-cyclodiphosphate synthase from Psychrobacter arcticus (strain DSM 17307 / VKM B-2377 / 273-4).